The chain runs to 313 residues: Ribosomal RNA small subunit methyltransferase H (313 aa).

S-adenosyl-L-methionine-binding positions include 35-37 (GGH), aspartate 55, phenylalanine 79, aspartate 101, and glutamine 108.

Belongs to the methyltransferase superfamily. RsmH family.

It localises to the cytoplasm. The catalysed reaction is cytidine(1402) in 16S rRNA + S-adenosyl-L-methionine = N(4)-methylcytidine(1402) in 16S rRNA + S-adenosyl-L-homocysteine + H(+). In terms of biological role, specifically methylates the N4 position of cytidine in position 1402 (C1402) of 16S rRNA. This chain is Ribosomal RNA small subunit methyltransferase H, found in Shigella flexneri.